The following is a 143-amino-acid chain: Small ribosomal subunit protein bS6 (143 aa).

Positions 98-143 (TEQSLIMKSKDEKGDKPERSERRRRDDEEGEAPAANDNDGDNAEAA) are disordered. A compositionally biased stretch (basic and acidic residues) spans 105–124 (KSKDEKGDKPERSERRRRDD).

It belongs to the bacterial ribosomal protein bS6 family.

Binds together with bS18 to 16S ribosomal RNA. The polypeptide is Small ribosomal subunit protein bS6 (Xanthomonas euvesicatoria pv. vesicatoria (strain 85-10) (Xanthomonas campestris pv. vesicatoria)).